We begin with the raw amino-acid sequence, 59 residues long: Preprotein translocase subunit SecG (59 aa).

The Cytoplasmic segment spans residues 1-33 (MARRESSGGSGGLMSSAGLMRYFEAEESAIKID). A helical membrane pass occupies residues 34-55 (PKTVIIAAVASGAFIWILNFTY). The Extracellular portion of the chain corresponds to 56-59 (GRFW).

Belongs to the SEC61-beta family. In terms of assembly, component of the protein translocase complex. Heterotrimer consisting of alpha (SecY), beta (SecG) and gamma (SecE) subunits. Can form oligomers of the heterotrimer.

It is found in the cell membrane. Functionally, involved in protein export. The function of the beta subunit is unknown, but it may be involved in stabilization of the trimeric complex. The protein is Preprotein translocase subunit SecG of Methanocella arvoryzae (strain DSM 22066 / NBRC 105507 / MRE50).